A 493-amino-acid chain; its full sequence is MQISIIQKGLEGWRGSILVFGLLEGALESQLNALKEICTPASLAKALQDKEFVGKQGDLQSFQLIGKEPREIVLIGLGSAEKLVLDDLRKATAISCRKVIGQEGTLGILLPWDIFDSDIAAKAVGEAVILSFFKDNRFQKDPKQKKLPNKLELLGLPESSQKYLSEIVPICSGVKLARELVGAPPNSLTPSALANQAKEIANQFGLEAKILGQEECQAKNMGAFLAVSQGSDLSPKFIHLTYRAKGEIKRRIAMVGKGLTFDSGGYNLKVGASQIEMMKYDMGGSAAVIGAARAIGELAPSGVEIHFLVATCENMINGSAVHPGDIVKASNGTTIEINNTDAEGRLTLADALTYACELKPDAIVDLATLTGACVIALGEELAGLWTNSKHLSKELKESAEACGEGLWEMPLQDSYKEGLKSMLADIKNTGPRAGGSITAALFLKEFIKEDIAWAHIDIAGTCWTDKDRGINPAGATGFGVRTLVNWASRSINP.

Lysine 257 and aspartate 262 together coordinate Mn(2+). Lysine 269 is a catalytic residue. Mn(2+) is bound by residues aspartate 281, aspartate 341, and glutamate 343. Arginine 345 is an active-site residue.

The protein belongs to the peptidase M17 family. Requires Mn(2+) as cofactor.

It is found in the cytoplasm. It carries out the reaction Release of an N-terminal amino acid, Xaa-|-Yaa-, in which Xaa is preferably Leu, but may be other amino acids including Pro although not Arg or Lys, and Yaa may be Pro. Amino acid amides and methyl esters are also readily hydrolyzed, but rates on arylamides are exceedingly low.. The catalysed reaction is Release of an N-terminal amino acid, preferentially leucine, but not glutamic or aspartic acids.. Functionally, presumably involved in the processing and regular turnover of intracellular proteins. Catalyzes the removal of unsubstituted N-terminal amino acids from various peptides. This chain is Probable cytosol aminopeptidase, found in Prochlorococcus marinus (strain MIT 9211).